Reading from the N-terminus, the 1575-residue chain is Ovochymase (1575 aa).

Residues 1 to 19 (MIVTFVALALSCCTPQVTA) form the signal peptide. The Peptidase S1 1 domain occupies 36 to 280 (IVGGEMAKLG…YSSWIANYTQ (245 aa)). Cys-61 and Cys-77 are oxidised to a cystine. Catalysis depends on charge relay system residues His-76 and Asp-132. Disulfide bonds link Cys-166-Cys-233, Cys-199-Cys-212, and Cys-223-Cys-256. Ser-227 (charge relay system) is an active-site residue. Residues Asn-277 and Asn-303 are each glycosylated (N-linked (GlcNAc...) asparagine). Intrachain disulfides connect Cys-300-Cys-330, Cys-358-Cys-386, Cys-432-Cys-460, and Cys-486-Cys-507. 2 CUB domains span residues 300–423 (CSSN…FHAV) and 432–545 (CGGI…YYFS). Asn-497, Asn-513, and Asn-549 each carry an N-linked (GlcNAc...) asparagine glycan. The 236-residue stretch at 575–810 (IVNGDIAIAG…YIDWIIATAN (236 aa)) folds into the Peptidase S1 2 domain. Cys-602 and Cys-618 are oxidised to a cystine. Residues His-617 and Asp-665 each act as charge relay system in the active site. Disulfide bonds link Cys-700/Cys-766, Cys-730/Cys-745, and Cys-756/Cys-786. N-linked (GlcNAc...) asparagine glycosylation occurs at Asn-748. The active-site Charge relay system is the Ser-760. The N-linked (GlcNAc...) asparagine glycan is linked to Asn-810. 7 disulfides stabilise this stretch: Cys-830–Cys-859, Cys-889–Cys-913, Cys-956–Cys-984, Cys-1012–Cys-1034, Cys-1080–Cys-1108, Cys-1135–Cys-1158, and Cys-1221–Cys-1246. 4 CUB domains span residues 830 to 949 (CIQL…YRLE), 956 to 1070 (CGQL…FVEL), 1080 to 1197 (CGGV…YTAV), and 1221 to 1341 (CQDS…YKLM). 4 N-linked (GlcNAc...) asparagine glycosylation sites follow: Asn-968, Asn-1027, Asn-1087, and Asn-1090. Asn-1273 is a glycosylation site (N-linked (GlcNAc...) asparagine). Residues 1314 to 1575 (YNGGEISMLF…FLKWITKIIQ (262 aa)) form the Peptidase S1 3 domain. Intrachain disulfides connect Cys-1376/Cys-1392 and Cys-1493/Cys-1507. Asn-1511 is a glycosylation site (N-linked (GlcNAc...) asparagine).

It belongs to the peptidase S1 family. Expressed in the testis and ovary. Expressed in the gonads and gametes. Expressed in the follicle cells covering the vitelline coat of ovarian egg.

Its subcellular location is the secreted. Its function is as follows. May be responsible for elevation of the vitelline coat at the late developmental stage of oogenesis and during fertilization in ovarian eggs. The chain is Ovochymase from Halocynthia roretzi (Sea squirt).